A 53-amino-acid chain; its full sequence is uncharacterized protein (53 aa).

This is an uncharacterized protein from Thermoproteus tenax (TTV1).